We begin with the raw amino-acid sequence, 343 residues long: Fructose-1,6-bisphosphatase class 1 (343 aa).

Glutamate 90, aspartate 109, leucine 111, and aspartate 112 together coordinate Mg(2+). Substrate contacts are provided by residues 112-115 and asparagine 199; that span reads DGSS. Glutamate 271 provides a ligand contact to Mg(2+).

It belongs to the FBPase class 1 family. In terms of assembly, homotetramer. The cofactor is Mg(2+).

It localises to the cytoplasm. The enzyme catalyses beta-D-fructose 1,6-bisphosphate + H2O = beta-D-fructose 6-phosphate + phosphate. The protein operates within carbohydrate biosynthesis; Calvin cycle. The polypeptide is Fructose-1,6-bisphosphatase class 1 (Rhodopseudomonas palustris (strain ATCC BAA-98 / CGA009)).